The following is a 480-amino-acid chain: UDP-N-acetylmuramate--L-alanine ligase (480 aa).

126–132 (GTHGKTT) serves as a coordination point for ATP.

The protein belongs to the MurCDEF family.

The protein localises to the cytoplasm. It carries out the reaction UDP-N-acetyl-alpha-D-muramate + L-alanine + ATP = UDP-N-acetyl-alpha-D-muramoyl-L-alanine + ADP + phosphate + H(+). It participates in cell wall biogenesis; peptidoglycan biosynthesis. Its function is as follows. Cell wall formation. This Blochmanniella pennsylvanica (strain BPEN) protein is UDP-N-acetylmuramate--L-alanine ligase.